Here is a 77-residue protein sequence, read N- to C-terminus: Serine protease inhibitor 3 (77 aa).

A signal peptide spans 1-17 (MMFTPLIVLTLLVLATA). 4 disulfide bridges follow: Cys21–Cys53, Cys30–Cys48, Cys33–Cys44, and Cys55–Cys68. The TIL domain maps to 21-74 (CGPNEQWSGCPKCELQSGESDKPCATICGEPKCYCSPDKYRRIPDGRCIRKIQC).

It localises to the secreted. Defends the organism against the host's proteinases. In Anisakis simplex (Herring worm), this protein is Serine protease inhibitor 3.